Consider the following 834-residue polypeptide: MHNSEFLSPVQSGTQRGTNRSILNNKKSGKGKKKSVFEAYMTKEEVSAGLKRGELIQGPLRINPKKFHEAYLPSPDGVRDLFIDGVVPRNRALNGDVVVVKLLPQEQWKVLKNDVCEDDDTPGHSTGNKQHALSPHLMKSSAKNPDLIIEAKVDSSAEDGHESALIGCLQKEIKDQDKLGAIEEKTSKQGDPKTFSDDCFQKTAKVVYILEKKHSRAATGFIKPLSDKSSDLARKRALFSPVDHRLPRIYVPLGDCPHDFAIHPETYANTLFICSITAWRDDSNFAEGKLMKSLGQAGEIEPETEGILVEYGVDFSDFPDKVLQCLPQDLPWTIPQEEFQKRKDLRNECIFTIDPATARDLDDALSCKPLPDGNFEVGVHIADVSYFVAEGSALDIMASERATSVYLVQKVIPMLPRLLCEELCSLNPMTDRLTFSVIWKITPQGEILDEWFGRSVICSCVKLSYDHAQNMINHPDKKIEQHELPPVSPQHTINEIHQAVLNLHLIAQNLRKQRFDDGALRLDQLKLTFTLDKESGLPQGCYIYQYRDSNKLVEEFMLLANMAVAHHIYRRFPEEALLRRHPPPQTKMLNDLIEFCDQMGLQLDFSSSGTLHKSLNDQFETDEYSAARKEVLTNMCSRPMQMAVYFCTGALKDETLFHHYALNVPLYTHFTSPIRRFADVIVHRLLAASLGCGPPLKMPKEVIQKQADHCNDRKTASKRVQELSAELFFSVFVKECGPLESEAMVMGVLNEAFDVIVLRFGVQKRIYCNSLPLVNSHFQQVGKRPELTLLWEPEKKGEEPVRQVISIFTLVEVVLKSDNVPLKYTAVLKSPEAQ.

Over residues 1-23 the composition is skewed to polar residues; it reads MHNSEFLSPVQSGTQRGTNRSIL. Residues 1-35 form a disordered region; that stretch reads MHNSEFLSPVQSGTQRGTNRSILNNKKSGKGKKKS. Positions 354 and 363 each coordinate Mg(2+).

The protein belongs to the RNR ribonuclease family. DIS3L2 subfamily. Mg(2+) is required as a cofactor. The cofactor is Mn(2+).

The protein resides in the cytoplasm. Its subcellular location is the P-body. In terms of biological role, 3'-5'-exoribonuclease that specifically recognizes RNAs polyuridylated at their 3' end and mediates their degradation. Component of an exosome-independent RNA degradation pathway that mediates degradation of both mRNAs and miRNAs that have been polyuridylated by a terminal uridylyltransferase. Essential for correct mitosis, and negatively regulates cell proliferation. The sequence is that of DIS3-like exonuclease 2 from Xenopus tropicalis (Western clawed frog).